A 185-amino-acid chain; its full sequence is Translocon-associated protein subunit gamma (185 aa).

Met-1 is modified (N-acetylmethionine). The Lumenal segment spans residues Met-1 to Lys-27. Ser-7 and Ser-11 each carry phosphoserine. The chain crosses the membrane as a helical span at residues Ser-28–Trp-48. Topologically, residues Arg-49–Asp-54 are cytoplasmic. Residues Leu-55–Ala-76 form a helical membrane-spanning segment. The Lumenal portion of the chain corresponds to Tyr-77 to Thr-135. Position 105 is a phosphoserine (Ser-105). The chain crosses the membrane as a helical span at residues Phe-136–Leu-157. At Lys-158–Thr-163 the chain is on the cytoplasmic side. Residues Val-164–Ser-184 traverse the membrane as a helical segment.

The protein belongs to the TRAP-gamma family. Heterotetramer of TRAP-alpha, TRAP-beta, TRAP-delta and TRAP-gamma.

Its subcellular location is the endoplasmic reticulum membrane. Its function is as follows. TRAP proteins are part of a complex whose function is to bind calcium to the ER membrane and thereby regulate the retention of ER resident proteins. This Mus musculus (Mouse) protein is Translocon-associated protein subunit gamma (Ssr3).